Reading from the N-terminus, the 520-residue chain is MSNPALQVYGGDEINAIVIDPGSFVTNIGYSGTDCPQSIMPSSYGNVETDGDTKRIFNEQPLLFPRAGMEIKPIVENSTIVDWDRAQEQWEYALNTDLKFESNKGTPVLLTEPIWNSEASRKKSLEILLESMEFEACYLAANSSAVSFAMGRPTCLVVDIGHDVSTVSPVIDGMTLSKSSTRNYVAGKYLNHLIAKNLKPREIVPIFQVLKKKPDFVKRTLSFDVNESVINFANERQFFQEFKETLLHIAPKSLSSFKDELATQTKRSLEAPWGEELIFDADTRYSFAEQLFRPVKEDFPEGWPASTDGIVKTWHNDYVPLKRTKPGTSTNTKEKENTAESTPVPASTEQEAVDSPSQEPNENGKRPVENKEDSSNNEQNSNEIKNEDANSNESSAKATVPSNGIQAKGEDEVAGIVDLINKSMMEADVDLRATLAHNVVLTGGTSKIPGLSDRIMHELNKSLPALKFRMLSSGHLRERQYQGWLGGSILASLGTFHQLWVGREEYEEVGPERLLKDRFR.

The disordered stretch occupies residues 320–406 (PLKRTKPGTS…KATVPSNGIQ (87 aa)). A compositionally biased stretch (polar residues) spans 339 to 361 (AESTPVPASTEQEAVDSPSQEPN). Residues 362–374 (ENGKRPVENKEDS) show a composition bias toward basic and acidic residues. Polar residues predominate over residues 389-405 (ANSNESSAKATVPSNGI).

The protein belongs to the actin family. ARP4 subfamily. As to quaternary structure, component of the NuA4 histone acetyltransferase complex, of the INO80 chromatin remodeling complex, and of the SWR1 chromatin remodeling complex.

It is found in the nucleus. Chromatin interaction component of the NuA4 histone acetyltransferase complex which is involved in transcriptional activation of selected genes principally by acetylation of nucleosomal histone H4 and H2A. The NuA4 complex is also involved in DNA repair. Is required for NuA4 complex integrity. Component of the SWR1 complex which mediates the ATP-dependent exchange of histone H2A for the H2A variant HZT1 leading to transcriptional regulation of selected genes by chromatin remodeling. Component of the INO80 complex which remodels chromatin by shifting nucleosomes and is involved in DNA repair. The sequence is that of Actin-related protein 4 (ARP4) from Kluyveromyces lactis (strain ATCC 8585 / CBS 2359 / DSM 70799 / NBRC 1267 / NRRL Y-1140 / WM37) (Yeast).